The chain runs to 387 residues: Sorting nexin-7 (387 aa).

The PX domain maps to 30 to 151 (KDLFITVDAP…VFLTAQAEEL (122 aa)). Residues Arg73, Gln75, Lys103, and Arg117 each coordinate a 1,2-diacyl-sn-glycero-3-phospho-(1D-myo-inositol-3-phosphate). The BAR domain maps to 178–387 (GVKNRPEEFM…PSEEDSEEKL (210 aa)).

It belongs to the sorting nexin family. As to quaternary structure, heterodimer; heterodimerizes with SNX4.

Its subcellular location is the early endosome membrane. In terms of biological role, involved in the regulation of endocytosis and in several stages of intracellular trafficking. Together with SNX4, involved in autophagosome assembly by regulating trafficking and recycling of phospholipid scramblase ATG9A. This chain is Sorting nexin-7, found in Mus musculus (Mouse).